The following is a 741-amino-acid chain: 1,4-alpha-glucan branching enzyme GlgB 2 (741 aa).

Residues 1 to 38 (MALRDTSIPEPSGPVPPAPGACATAPPLDPTDRGRLLA) are disordered. Asp421 acts as the Nucleophile in catalysis. Catalysis depends on Glu474, which acts as the Proton donor.

Belongs to the glycosyl hydrolase 13 family. GlgB subfamily. Monomer.

The enzyme catalyses Transfers a segment of a (1-&gt;4)-alpha-D-glucan chain to a primary hydroxy group in a similar glucan chain.. It participates in glycan biosynthesis; glycogen biosynthesis. Its function is as follows. Catalyzes the formation of the alpha-1,6-glucosidic linkages in glycogen by scission of a 1,4-alpha-linked oligosaccharide from growing alpha-1,4-glucan chains and the subsequent attachment of the oligosaccharide to the alpha-1,6 position. This is 1,4-alpha-glucan branching enzyme GlgB 2 (glgB2) from Streptomyces coelicolor (strain ATCC BAA-471 / A3(2) / M145).